The following is a 465-amino-acid chain: Kynureninase (465 aa).

An N-acetylmethionine modification is found at Met-1. Pyridoxal 5'-phosphate-binding positions include Leu-137, Thr-138, 165-168, Ser-221, Asp-250, His-253, and Tyr-275; that span reads FPSD. Lys-276 is modified (N6-(pyridoxal phosphate)lysine). Pyridoxal 5'-phosphate contacts are provided by Trp-305 and Asn-333.

The protein belongs to the kynureninase family. In terms of assembly, homodimer. Pyridoxal 5'-phosphate serves as cofactor. As to expression, expressed in all tissues tested (heart, brain placenta, lung, liver, skeletal muscle, kidney and pancreas). Highest levels found in placenta, liver and lung. Expressed in all brain regions.

It localises to the cytoplasm. It is found in the cytosol. It carries out the reaction L-kynurenine + H2O = anthranilate + L-alanine + H(+). The enzyme catalyses 3-hydroxy-L-kynurenine + H2O = 3-hydroxyanthranilate + L-alanine + H(+). The protein operates within amino-acid degradation; L-kynurenine degradation; L-alanine and anthranilate from L-kynurenine: step 1/1. It participates in cofactor biosynthesis; NAD(+) biosynthesis; quinolinate from L-kynurenine: step 2/3. With respect to regulation, inhibited by o-methoxybenzoylalanine (OMBA). In terms of biological role, catalyzes the cleavage of L-kynurenine (L-Kyn) and L-3-hydroxykynurenine (L-3OHKyn) into anthranilic acid (AA) and 3-hydroxyanthranilic acid (3-OHAA), respectively. Has a preference for the L-3-hydroxy form. Also has cysteine-conjugate-beta-lyase activity. This Homo sapiens (Human) protein is Kynureninase.